A 518-amino-acid polypeptide reads, in one-letter code: Probable malate:quinone oxidoreductase (518 aa).

The tract at residues 495–518 (GAIPATTDGQSTAGTEHTPTAATV) is disordered. The span at 501-518 (TDGQSTAGTEHTPTAATV) shows a compositional bias: polar residues.

It belongs to the MQO family. The cofactor is FAD.

It catalyses the reaction (S)-malate + a quinone = a quinol + oxaloacetate. The protein operates within carbohydrate metabolism; tricarboxylic acid cycle; oxaloacetate from (S)-malate (quinone route): step 1/1. The polypeptide is Probable malate:quinone oxidoreductase (Mycolicibacterium gilvum (strain PYR-GCK) (Mycobacterium gilvum (strain PYR-GCK))).